Reading from the N-terminus, the 130-residue chain is Small ribosomal subunit protein uS11 (130 aa).

The protein belongs to the universal ribosomal protein uS11 family. As to quaternary structure, part of the 30S ribosomal subunit. Interacts with proteins S7 and S18. Binds to IF-3.

Located on the platform of the 30S subunit, it bridges several disparate RNA helices of the 16S rRNA. Forms part of the Shine-Dalgarno cleft in the 70S ribosome. The polypeptide is Small ribosomal subunit protein uS11 (Syntrophus aciditrophicus (strain SB)).